The primary structure comprises 296 residues: Small ribosomal subunit biogenesis GTPase RsgA (296 aa).

In terms of domain architecture, CP-type G spans 65 to 223 (INRIGRPAVA…LADTPGFSSI (159 aa)). GTP is bound by residues 114–117 (SKAD) and 166–174 (GQSGAGKST). Positions 247, 252, 254, and 260 each coordinate Zn(2+).

It belongs to the TRAFAC class YlqF/YawG GTPase family. RsgA subfamily. Monomer. Associates with 30S ribosomal subunit, binds 16S rRNA. The cofactor is Zn(2+).

It localises to the cytoplasm. Functionally, one of several proteins that assist in the late maturation steps of the functional core of the 30S ribosomal subunit. Helps release RbfA from mature subunits. May play a role in the assembly of ribosomal proteins into the subunit. Circularly permuted GTPase that catalyzes slow GTP hydrolysis, GTPase activity is stimulated by the 30S ribosomal subunit. In Lactobacillus acidophilus (strain ATCC 700396 / NCK56 / N2 / NCFM), this protein is Small ribosomal subunit biogenesis GTPase RsgA.